We begin with the raw amino-acid sequence, 660 residues long: tRNA 5-methylaminomethyl-2-thiouridine biosynthesis bifunctional protein MnmC (660 aa).

The segment at methionine 1–alanine 242 is tRNA (mnm(5)s(2)U34)-methyltransferase. Residues isoleucine 266–alanine 660 are FAD-dependent cmnm(5)s(2)U34 oxidoreductase.

In the N-terminal section; belongs to the methyltransferase superfamily. tRNA (mnm(5)s(2)U34)-methyltransferase family. It in the C-terminal section; belongs to the DAO family. FAD serves as cofactor.

It is found in the cytoplasm. The enzyme catalyses 5-aminomethyl-2-thiouridine(34) in tRNA + S-adenosyl-L-methionine = 5-methylaminomethyl-2-thiouridine(34) in tRNA + S-adenosyl-L-homocysteine + H(+). In terms of biological role, catalyzes the last two steps in the biosynthesis of 5-methylaminomethyl-2-thiouridine (mnm(5)s(2)U) at the wobble position (U34) in tRNA. Catalyzes the FAD-dependent demodification of cmnm(5)s(2)U34 to nm(5)s(2)U34, followed by the transfer of a methyl group from S-adenosyl-L-methionine to nm(5)s(2)U34, to form mnm(5)s(2)U34. The protein is tRNA 5-methylaminomethyl-2-thiouridine biosynthesis bifunctional protein MnmC of Burkholderia pseudomallei (strain K96243).